The following is a 432-amino-acid chain: Adenylosuccinate synthetase (432 aa).

Residues 12 to 18 (GDEGKGK) and 40 to 42 (GHT) contribute to the GTP site. The active-site Proton acceptor is the Asp13. 2 residues coordinate Mg(2+): Asp13 and Gly40. IMP-binding positions include 13–16 (DEGK), 38–41 (NAGH), Thr132, Arg146, Gln226, Thr241, and Arg305. The active-site Proton donor is His41. Residue 301–307 (TVTGRKR) coordinates substrate. GTP is bound by residues Arg307, 333–335 (KLD), and 415–417 (STS).

It belongs to the adenylosuccinate synthetase family. In terms of assembly, homodimer. Mg(2+) serves as cofactor.

The protein localises to the cytoplasm. It carries out the reaction IMP + L-aspartate + GTP = N(6)-(1,2-dicarboxyethyl)-AMP + GDP + phosphate + 2 H(+). Its pathway is purine metabolism; AMP biosynthesis via de novo pathway; AMP from IMP: step 1/2. Plays an important role in the de novo pathway of purine nucleotide biosynthesis. Catalyzes the first committed step in the biosynthesis of AMP from IMP. The chain is Adenylosuccinate synthetase from Chelativorans sp. (strain BNC1).